The sequence spans 142 residues: 3-hydroxyacyl-[acyl-carrier-protein] dehydratase FabZ (142 aa).

His48 is a catalytic residue.

The protein belongs to the thioester dehydratase family. FabZ subfamily.

Its subcellular location is the cytoplasm. The enzyme catalyses a (3R)-hydroxyacyl-[ACP] = a (2E)-enoyl-[ACP] + H2O. Functionally, involved in unsaturated fatty acids biosynthesis. Catalyzes the dehydration of short chain beta-hydroxyacyl-ACPs and long chain saturated and unsaturated beta-hydroxyacyl-ACPs. The sequence is that of 3-hydroxyacyl-[acyl-carrier-protein] dehydratase FabZ from Clostridioides difficile (strain 630) (Peptoclostridium difficile).